The primary structure comprises 66 residues: Xenoxin-3 (66 aa).

Cystine bridges form between Cys-3/Cys-24, Cys-17/Cys-37, Cys-43/Cys-58, and Cys-59/Cys-64.

In terms of tissue distribution, expressed by the skin dorsal glands.

It localises to the secreted. In terms of biological role, lacks alpha-neurotoxic activity, has apparently no antibacterial activity, nor anti-coagulant potency. This is Xenoxin-3 from Xenopus laevis (African clawed frog).